A 1770-amino-acid chain; its full sequence is Transposon Ty2-C Gag-Pol polyprotein (1770 aa).

Composition is skewed to polar residues over residues 1–11 (MESQQLHQNPR), 19–39 (ASVT…SASN), and 49–60 (KVNSQQETTPGT). 2 disordered regions span residues 1-88 (MESQ…YQQH) and 355-453 (SQYK…LPDH). An RNA-binding region spans residues 295–397 (ENNINVSDRL…SSKPRAAKAH (103 aa)). Over residues 369-382 (TSPNTTNTKVTTRN) the composition is skewed to low complexity. Composition is skewed to polar residues over residues 399 to 408 (IATSSKFSRV) and 415 to 435 (ESTV…GQQQ). Asp-457 (for protease activity; shared with dimeric partner) is an active-site residue. The interval 579–636 (NVNKSKSVNKYPYPLIHRMLGHANFRSIQKSLKKNAVTYLKESDIEWSNASTYQCPDC) is integrase-type zinc finger-like. Residues 656-831 (ESYEPFQYLH…AGLDITTILP (176 aa)) enclose the Integrase catalytic domain. Residues Asp-667 and Asp-732 each contribute to the Mg(2+) site. 2 disordered regions span residues 1003–1038 (EMGG…MIDL) and 1057–1205 (GGTE…TEIE). Polar residues-rich tracts occupy residues 1009–1024 (ESDT…FTAR) and 1065–1082 (QRNS…STPS). Positions 1193–1227 (KKRSLEDNETEIEVSRDTWNNKNMRSLEPPRSKKR) match the Bipartite nuclear localization signal motif. The region spanning 1353–1491 (NDYYITQLDI…DILGLEIKYQ (139 aa)) is the Reverse transcriptase Ty1/copia-type domain. The Mg(2+) site is built by Asp-1361, Asp-1442, Asp-1443, Asp-1625, Glu-1667, and Asp-1700. An RNase H Ty1/copia-type domain is found at 1625–1767 (DASYGNQPYY…IKTFKLLTNK (143 aa)).

The capsid protein forms a homotrimer, from which the VLPs are assembled. The protease is a homodimer, whose active site consists of two apposed aspartic acid residues. Initially, virus-like particles (VLPs) are composed of the structural unprocessed proteins Gag and Gag-Pol, and also contain the host initiator methionine tRNA (tRNA(i)-Met) which serves as a primer for minus-strand DNA synthesis, and a dimer of genomic Ty RNA. Processing of the polyproteins occurs within the particle and proceeds by an ordered pathway, called maturation. First, the protease (PR) is released by autocatalytic cleavage of the Gag-Pol polyprotein, and this cleavage is a prerequisite for subsequent processing at the remaining sites to release the mature structural and catalytic proteins. Maturation takes place prior to the RT reaction and is required to produce transposition-competent VLPs.

Its subcellular location is the cytoplasm. The protein resides in the nucleus. It carries out the reaction DNA(n) + a 2'-deoxyribonucleoside 5'-triphosphate = DNA(n+1) + diphosphate. The catalysed reaction is Endonucleolytic cleavage to 5'-phosphomonoester.. Capsid protein (CA) is the structural component of the virus-like particle (VLP), forming the shell that encapsulates the retrotransposons dimeric RNA genome. The particles are assembled from trimer-clustered units and there are holes in the capsid shells that allow for the diffusion of macromolecules. CA also has nucleocapsid-like chaperone activity, promoting primer tRNA(i)-Met annealing to the multipartite primer-binding site (PBS), dimerization of Ty2 RNA and initiation of reverse transcription. Its function is as follows. The aspartyl protease (PR) mediates the proteolytic cleavages of the Gag and Gag-Pol polyproteins after assembly of the VLP. In terms of biological role, reverse transcriptase/ribonuclease H (RT) is a multifunctional enzyme that catalyzes the conversion of the retro-elements RNA genome into dsDNA within the VLP. The enzyme displays a DNA polymerase activity that can copy either DNA or RNA templates, and a ribonuclease H (RNase H) activity that cleaves the RNA strand of RNA-DNA heteroduplexes during plus-strand synthesis and hydrolyzes RNA primers. The conversion leads to a linear dsDNA copy of the retrotransposon that includes long terminal repeats (LTRs) at both ends. Functionally, integrase (IN) targets the VLP to the nucleus, where a subparticle preintegration complex (PIC) containing at least integrase and the newly synthesized dsDNA copy of the retrotransposon must transit the nuclear membrane. Once in the nucleus, integrase performs the integration of the dsDNA into the host genome. This chain is Transposon Ty2-C Gag-Pol polyprotein (TY2B-C), found in Saccharomyces cerevisiae (strain ATCC 204508 / S288c) (Baker's yeast).